A 431-amino-acid polypeptide reads, in one-letter code: Glycerol-3-phosphate dehydrogenase [NAD(P)+] (431 aa).

Polar residues predominate over residues 1–19 (MTSANDKSTDTNVDSTQAE). The segment at 1 to 25 (MTSANDKSTDTNVDSTQAEQKMAEK) is disordered. NADPH-binding residues include Ser79, Phe80, Arg100, and Lys173. Residues Lys173 and Gly201 each contribute to the sn-glycerol 3-phosphate site. Ala205 contributes to the NADPH binding site. Residues Lys256, Asp309, Ser319, Arg320, and Asn321 each coordinate sn-glycerol 3-phosphate. The active-site Proton acceptor is Lys256. Residue Arg320 coordinates NADPH. Residue Glu346 coordinates NADPH.

The protein belongs to the NAD-dependent glycerol-3-phosphate dehydrogenase family.

The protein resides in the cytoplasm. The catalysed reaction is sn-glycerol 3-phosphate + NAD(+) = dihydroxyacetone phosphate + NADH + H(+). The enzyme catalyses sn-glycerol 3-phosphate + NADP(+) = dihydroxyacetone phosphate + NADPH + H(+). It participates in membrane lipid metabolism; glycerophospholipid metabolism. Functionally, catalyzes the reduction of the glycolytic intermediate dihydroxyacetone phosphate (DHAP) to sn-glycerol 3-phosphate (G3P), the key precursor for phospholipid synthesis. This chain is Glycerol-3-phosphate dehydrogenase [NAD(P)+], found in Psychrobacter arcticus (strain DSM 17307 / VKM B-2377 / 273-4).